The sequence spans 248 residues: uncharacterized protein (248 aa).

The protein to M.jannaschii MJ1452.

This is an uncharacterized protein from Methanothermobacter thermautotrophicus (strain ATCC 29096 / DSM 1053 / JCM 10044 / NBRC 100330 / Delta H) (Methanobacterium thermoautotrophicum).